The primary structure comprises 202 residues: Oxopyrrolidines biosynthesis cluster protein O (202 aa).

Functionally, part of the gene cluster that mediates the biosynthesis of oxopyrrolidines, polyketide-amino acid hybrid compounds with feature structures of tetramic acid. Does not seem to play a role in oxopyrrolidines A and B biosynthesis. This is Oxopyrrolidines biosynthesis cluster protein O from Penicillium oxalicum (strain 114-2 / CGMCC 5302) (Penicillium decumbens).